The sequence spans 63 residues: Light-harvesting protein B-800/850 alpha chain (63 aa).

The Cytoplasmic segment spans residues 1–14 (MNNAKMWLVVKPTV). A helical transmembrane segment spans residues 15-35 (GIPLFLVACAIASFLVHLMLV). H31 is an a bacteriochlorophyll binding site. The Periplasmic segment spans residues 36–63 (LTTGWMGDYYSGSFEAASLVSNATTLLS).

It belongs to the antenna complex alpha subunit family. In terms of assembly, the core complex is formed by different alpha and beta chains, binding bacteriochlorophyll molecules, and arranged most probably in tetrameric structures disposed around the reaction center. The non-pigmented gamma chains may constitute additional components.

The protein resides in the cell inner membrane. In terms of biological role, antenna complexes are light-harvesting systems, which transfer the excitation energy to the reaction centers. This chain is Light-harvesting protein B-800/850 alpha chain (pucA), found in Rhodovulum sulfidophilum (Rhodobacter sulfidophilus).